The chain runs to 362 residues: MACLKLQAVTKSYDGVTPVIKQIDLDVTDGEFIVMVGPSGCGKSTLLRMVAGLERTTSGDIYIDNLRVTDMEPKDRGIAMVFQNYALYPHMSVFDNMAYGLKIRGFGKEQIRQRVDEAARILELEPLLKRKPRELSGGQRQRVAMGRAIVREPAVFLFDEPLSNLDAKLRVQMRLELQQLHRRLKTTSLYVTHDQVEAMTLAQRVIVMNKGVAEQIGTPSEVYQRPATLFVASFIGSPAMNLLAGTVSPDGRAFILADGMTLPLEVPRPQWADRRLTLGIRPEHIQQRVSQQKTSAQGVPMTLLTLELLGADNLAHGQWGGQSVIARLSHEEMPTAGSVLYLYLPPAALHFFDSESGLRMES.

Residues 4 to 235 form the ABC transporter domain; the sequence is LKLQAVTKSY…PATLFVASFI (232 aa). 37–44 lines the ATP pocket; it reads GPSGCGKS.

It belongs to the ABC transporter superfamily. sn-glycerol-3-phosphate importer (TC 3.A.1.1.3) family. As to quaternary structure, the complex is composed of two ATP-binding proteins (UgpC), two transmembrane proteins (UgpA and UgpE) and a solute-binding protein (UgpB).

Its subcellular location is the cell inner membrane. It carries out the reaction sn-glycerol 3-phosphate(out) + ATP + H2O = sn-glycerol 3-phosphate(in) + ADP + phosphate + H(+). Functionally, part of the ABC transporter complex UgpBAEC involved in sn-glycerol-3-phosphate (G3P) import. Responsible for energy coupling to the transport system. This is sn-glycerol-3-phosphate import ATP-binding protein UgpC from Yersinia enterocolitica serotype O:8 / biotype 1B (strain NCTC 13174 / 8081).